Reading from the N-terminus, the 357-residue chain is Gas vesicle ATPase GvpN (357 aa).

The segment covering 22-36 (ATSASKNGGRTTPSA) has biased composition (polar residues). The tract at residues 22–43 (ATSASKNGGRTTPSALTPRPRS) is disordered. An ATP-binding site is contributed by 72 to 79 (GPAGTGKT).

Belongs to the CbbQ/NirQ/NorQ/GpvN family. As to quaternary structure, forms homodimers, probably interacts with other GV proteins including GvpA.

Its subcellular location is the gas vesicle. The protein localises to the cytoplasm. It catalyses the reaction ATP + H2O = ADP + phosphate + H(+). In terms of biological role, an ATPase that functions in gas vesicle formation. A minor component of the gas vesicle, also found in soluble extracts. Gas vesicles (GV) are hollow, gas filled proteinaceous nanostructures. During planktonic growth they allow positioning of the organism at a favorable depth for light or nutrient acquisition. This chain is Gas vesicle ATPase GvpN, found in Ancylobacter aquaticus.